A 93-amino-acid polypeptide reads, in one-letter code: Alpha-defensin 21 (93 aa).

Residues 1–19 (MKTLVLLSALILLAYQVQT) form the signal peptide. A propeptide spanning residues 20 to 58 (DPIQNTDEETNTEEQPGEDDQAVSVSFGGQEGSALHEKL) is cleaved from the precursor. Residues 22–43 (IQNTDEETNTEEQPGEDDQAVS) form a disordered region. The span at 25 to 40 (TDEETNTEEQPGEDDQ) shows a compositional bias: acidic residues. Cystine bridges form between C64/C89, C66/C81, and C71/C88.

It belongs to the alpha-defensin family.

The protein localises to the secreted. May have microbicidal activities. This Mus musculus (Mouse) protein is Alpha-defensin 21 (Defa21).